The chain runs to 1266 residues: Rho GTPase-activating protein 29 (1266 aa).

A phosphoserine mark is found at serine 166, serine 171, serine 174, and serine 185. The F-BAR domain occupies 187-457 (IELDNLLLKN…SAKLYDPGQE (271 aa)). Residues 291–413 (RKNEMEKQRK…EILTQLRTLV (123 aa)) adopt a coiled-coil conformation. A phosphoserine mark is found at serine 496, serine 516, and serine 549. A compositionally biased stretch (low complexity) spans 538-556 (SESTGGSSESRSLDSESIS). The segment at 538 to 596 (SESTGGSSESRSLDSESISPGDFHRKLPRTPSSGTMSSADDLDEREPPSPSEAGPNSLG) is disordered. The Phorbol-ester/DAG-type zinc finger occupies 609-654 (THKFRKLRSPTKCRDCEGIVMFPGVECEECLLVCHRKCLENLVIVC). The 216-residue stretch at 668 to 883 (AEFIQVAKKE…FLITYAQKIF (216 aa)) folds into the Rho-GAP domain. Serine 915, serine 951, and serine 1023 each carry phosphoserine. 3 disordered regions span residues 1033 to 1054 (AGSPTERSSRNTGNTDSDKFGK), 1114 to 1153 (VSTGNNRGHSSGAAQPSKAHADPARSARDTSEHSSSDSCP), and 1222 to 1248 (VQTSGQPKESSEEPGLPEGTPTCQRPR). Polar residues predominate over residues 1115-1127 (STGNNRGHSSGAA). Positions 1132–1148 (AHADPARSARDTSEHSS) are enriched in basic and acidic residues. Phosphoserine is present on residues serine 1149 and serine 1151. Residues 1263 to 1266 (PQFV) form an interaction with PTPN13/PTPL1 region.

Interacts with PTPN13/PTPL1. Interacts with RAP2A via its coiled coil domain. Interacts with RASIP1.

GTPase activator for the Rho-type GTPases by converting them to an inactive GDP-bound state. Has strong activity toward RHOA, and weaker activity toward RAC1 and CDC42. May act as a specific effector of RAP2A to regulate Rho. In concert with RASIP1, suppresses RhoA signaling and dampens ROCK and MYH9 activities in endothelial cells and plays an essential role in blood vessel tubulogenesis. The protein is Rho GTPase-activating protein 29 (Arhgap29) of Rattus norvegicus (Rat).